The following is a 176-amino-acid chain: 3-hydroxydecanoyl-[acyl-carrier-protein] dehydratase (176 aa).

Residue His71 is part of the active site.

Belongs to the thioester dehydratase family. FabA subfamily. As to quaternary structure, homodimer.

The protein resides in the cytoplasm. It carries out the reaction a (3R)-hydroxyacyl-[ACP] = a (2E)-enoyl-[ACP] + H2O. It catalyses the reaction (3R)-hydroxydecanoyl-[ACP] = (2E)-decenoyl-[ACP] + H2O. The enzyme catalyses (2E)-decenoyl-[ACP] = (3Z)-decenoyl-[ACP]. It participates in lipid metabolism; fatty acid biosynthesis. Functionally, necessary for the introduction of cis unsaturation into fatty acids. Catalyzes the dehydration of (3R)-3-hydroxydecanoyl-ACP to E-(2)-decenoyl-ACP and then its isomerization to Z-(3)-decenoyl-ACP. Can catalyze the dehydratase reaction for beta-hydroxyacyl-ACPs with saturated chain lengths up to 16:0, being most active on intermediate chain length. This chain is 3-hydroxydecanoyl-[acyl-carrier-protein] dehydratase, found in Rhodopseudomonas palustris (strain BisB18).